The sequence spans 161 residues: Phenolic acid decarboxylase PadC (161 aa).

The substrate site is built by tyrosine 11 and tyrosine 13. The active-site Proton donor is tyrosine 19. Arginine 41 contributes to the substrate binding site. Residue glutamate 64 is the Proton acceptor of the active site.

Belongs to the PadC family. In terms of assembly, homodimer.

The enzyme catalyses (E)-4-coumarate + H(+) = 4-vinylphenol + CO2. The catalysed reaction is (E)-cinnamate + H(+) = styrene + CO2. It catalyses the reaction (E)-ferulate + H(+) = 2-methoxy-4-vinylphenol + CO2. Functionally, involved in the decarboxylation and detoxification of phenolic derivatives. It is able to catalyze the decarboxylation of ferulic, p-coumaric and caffeic acids. In Bacillus subtilis (strain 168), this protein is Phenolic acid decarboxylase PadC (padC).